The sequence spans 440 residues: Transposon Ty1-LR4 Gag polyprotein (440 aa).

Polar residues-rich tracts occupy residues 1–10, 48–60, and 127–152; these read MESQQLSQHP, TKAN…TPAS, and QSQF…GNTF. 3 disordered regions span residues 1–93, 126–173, and 352–440; these read MESQ…MMTQ, PQSQ…RPPP, and GSRN…PGTY. Low complexity predominate over residues 153-165; the sequence is TDSSSADSDMTST. Residues 299–401 form an RNA-binding region; the sequence is NNGIHINNKV…NSKSKTARAH (103 aa). Low complexity predominate over residues 402–418; that stretch reads NVSTSNNSPSTDNDSIS. A Phosphoserine modification is found at Ser416. The span at 419–428 shows a compositional bias: polar residues; sequence KSTTEPIQLN. The span at 429–440 shows a compositional bias: basic and acidic residues; that stretch reads NKHDLHLRPGTY.

In terms of assembly, homotrimer.

Its subcellular location is the cytoplasm. Its function is as follows. Capsid protein (CA) is the structural component of the virus-like particle (VLP), forming the shell that encapsulates the retrotransposons dimeric RNA genome. The particles are assembled from trimer-clustered units and there are holes in the capsid shells that allow for the diffusion of macromolecules. CA also has nucleocapsid-like chaperone activity, promoting primer tRNA(i)-Met annealing to the multipartite primer-binding site (PBS), dimerization of Ty1 RNA and initiation of reverse transcription. This Saccharomyces cerevisiae (strain ATCC 204508 / S288c) (Baker's yeast) protein is Transposon Ty1-LR4 Gag polyprotein (TY1A-LR4).